Here is a 221-residue protein sequence, read N- to C-terminus: Small ribosomal subunit protein uS2c (221 aa).

The protein belongs to the universal ribosomal protein uS2 family.

It is found in the plastid. The protein localises to the chloroplast. This Cyanidioschyzon merolae (strain NIES-3377 / 10D) (Unicellular red alga) protein is Small ribosomal subunit protein uS2c (rps2).